The following is a 107-amino-acid chain: UPF0060 membrane protein A1S_1909 (107 aa).

The next 4 helical transmembrane spans lie at 2-22 (FGLF…PYLI), 28-48 (SAWL…LLTL), 56-76 (IYAA…RFVD), and 85-105 (ILGG…PQGL).

This sequence belongs to the UPF0060 family.

It localises to the cell inner membrane. This Acinetobacter baumannii (strain ATCC 17978 / DSM 105126 / CIP 53.77 / LMG 1025 / NCDC KC755 / 5377) protein is UPF0060 membrane protein A1S_1909.